A 782-amino-acid chain; its full sequence is Ribosome biogenesis protein ERB1 (782 aa).

Residues 1 to 11 are compositionally biased toward basic residues; sequence MSVNSRKRKVA. The tract at residues 1–120 is disordered; sequence MSVNSRKRKV…LEGEEDESLK (120 aa). 2 stretches are compositionally biased toward acidic residues: residues 39–51 and 59–75; these read DESEDDQDAEDTD and LSDEDFEDEEDSGDEAE. Polar residues predominate over residues 82–92; the sequence is RNLNTSGGSQQ. The span at 106 to 117 shows a compositional bias: acidic residues; the sequence is GADGELEGEEDE. 2 WD repeats span residues 432–471 and 475–516; these read GQEGRVRCVSVDPQGIFVASGGDDGYVRIWELLTGRQVWN and SDEE…PDVE. The tract at residues 533–556 is disordered; that stretch reads KPSTAANGEAPKQSPGKWSRPGSR. 4 WD repeats span residues 612-652, 653-692, 696-736, and 752-782; these read RLKG…KILQ, PGAKWISSIDVHPGGDNIIVGTYDKRLLWHDLDLSNKPYK, FHKE…DLME, and KSRLGVMDLDWHPREPWCVSAGADGTLRLWN.

This sequence belongs to the WD repeat BOP1/ERB1 family. As to quaternary structure, component of the NOP7 complex, composed of ERB1, NOP7 and YTM1. The complex is held together by ERB1, which interacts with NOP7 via its N-terminal domain and with YTM1 via a high-affinity interaction between the seven-bladed beta-propeller domains of the 2 proteins. The NOP7 complex associates with the 66S pre-ribosome.

The protein resides in the nucleus. The protein localises to the nucleolus. It localises to the nucleoplasm. Functionally, component of the NOP7 complex, which is required for maturation of the 25S and 5.8S ribosomal RNAs and formation of the 60S ribosome. This Phaeosphaeria nodorum (strain SN15 / ATCC MYA-4574 / FGSC 10173) (Glume blotch fungus) protein is Ribosome biogenesis protein ERB1.